A 411-amino-acid polypeptide reads, in one-letter code: LL-diaminopimelate aminotransferase (411 aa).

Substrate is bound by residues Y15 and G42. Residues Y72, 108 to 109 (SK), Y132, N187, Y218, and 246 to 248 (SFS) each bind pyridoxal 5'-phosphate. Residues K109, Y132, and N187 each coordinate substrate. K249 carries the N6-(pyridoxal phosphate)lysine modification. Residues R257 and N292 each contribute to the pyridoxal 5'-phosphate site. Substrate contacts are provided by N292 and R388.

The protein belongs to the class-I pyridoxal-phosphate-dependent aminotransferase family. LL-diaminopimelate aminotransferase subfamily. As to quaternary structure, homodimer. Pyridoxal 5'-phosphate serves as cofactor.

It carries out the reaction (2S,6S)-2,6-diaminopimelate + 2-oxoglutarate = (S)-2,3,4,5-tetrahydrodipicolinate + L-glutamate + H2O + H(+). Its pathway is amino-acid biosynthesis; L-lysine biosynthesis via DAP pathway; LL-2,6-diaminopimelate from (S)-tetrahydrodipicolinate (aminotransferase route): step 1/1. In terms of biological role, involved in the synthesis of meso-diaminopimelate (m-DAP or DL-DAP), required for both lysine and peptidoglycan biosynthesis. Catalyzes the direct conversion of tetrahydrodipicolinate to LL-diaminopimelate. This Gloeothece citriformis (strain PCC 7424) (Cyanothece sp. (strain PCC 7424)) protein is LL-diaminopimelate aminotransferase.